The primary structure comprises 566 residues: Transcription factor opdL (566 aa).

A DNA-binding region (zn(2)-C6 fungal-type) is located at residues 15 to 45 (CATCARAKCRCVPRNGGRGRCERCHHLNKEC).

Its subcellular location is the nucleus. Functionally, transcription factor; part of the gene cluster that mediates the biosynthesis of oxopyrrolidines, polyketide-amino acid hybrid compounds with feature structures of tetramic acid. The sequence is that of Transcription factor opdL from Penicillium oxalicum (strain 114-2 / CGMCC 5302) (Penicillium decumbens).